The following is a 253-amino-acid chain: MSDPINEHANEPASFPIKEHFQLKETIVTIAADNLAHIEAAKEAIRIHRAALETYIFSDPYFQLTLEPYECPENAPEVVRRMVKAGNTMGIGPMSAVAGTISALAVESMVKAGAKYAIVDNGGDIALINDRPVVVGIYAGQSTIKNLGLVFEPRGSITGVCTSAGTVGPSISFGMADAAAVFSDDVSLADAAATALGNEVNIGKESVEASFKAVKGIPEIKGALVIQGEYIGMWGQVPRVTRADVRYEYITKA.

The protein belongs to the UPF0280 family.

The chain is UPF0280 protein Mbar_A3697 from Methanosarcina barkeri (strain Fusaro / DSM 804).